Consider the following 201-residue polypeptide: ATP-dependent Clp protease proteolytic subunit (201 aa).

Residue serine 97 is the Nucleophile of the active site. Histidine 122 is a catalytic residue.

Belongs to the peptidase S14 family. As to quaternary structure, fourteen ClpP subunits assemble into 2 heptameric rings which stack back to back to give a disk-like structure with a central cavity, resembling the structure of eukaryotic proteasomes.

The protein localises to the cytoplasm. The enzyme catalyses Hydrolysis of proteins to small peptides in the presence of ATP and magnesium. alpha-casein is the usual test substrate. In the absence of ATP, only oligopeptides shorter than five residues are hydrolyzed (such as succinyl-Leu-Tyr-|-NHMec, and Leu-Tyr-Leu-|-Tyr-Trp, in which cleavage of the -Tyr-|-Leu- and -Tyr-|-Trp bonds also occurs).. Functionally, cleaves peptides in various proteins in a process that requires ATP hydrolysis. Has a chymotrypsin-like activity. Plays a major role in the degradation of misfolded proteins. The protein is ATP-dependent Clp protease proteolytic subunit of Nitratidesulfovibrio vulgaris (strain ATCC 29579 / DSM 644 / CCUG 34227 / NCIMB 8303 / VKM B-1760 / Hildenborough) (Desulfovibrio vulgaris).